A 247-amino-acid polypeptide reads, in one-letter code: Peroxisomal membrane protein 11A (247 aa).

Residues 1 to 83 lie on the Cytoplasmic side of the membrane; it reads MDAFTRFTNQ…SIHATDLVPR (83 aa). The chain crosses the membrane as a helical span at residues 84-105; that stretch reads LCLTLANLNRVIYFICDTILWV. Over 106 to 219 the chain is Lumenal; it reads RSVGLTSGIN…DQLGIYKSNP (114 aa). A helical transmembrane segment spans residues 220 to 239; the sequence is GIIGLGGLVSSIAGMITVAY. The required for homodimerization, interaction with PEX11G, and peroxisomal localization stretch occupies residues 220–239; the sequence is GIIGLGGLVSSIAGMITVAY. Residues 240–247 lie on the Cytoplasmic side of the membrane; it reads PQMKLKTR.

The protein belongs to the peroxin-11 family. In terms of assembly, homodimer. Heterodimer with PEX11G. Probably interacts with COPB2 and COPA. Interacts with PEX19. Interacts with FIS1. Post-translationally, seems not to be N-glycosylated.

The protein resides in the peroxisome membrane. Functionally, may be involved in peroxisomal proliferation and may regulate peroxisomes division. May mediate binding of coatomer proteins to the peroxisomal membrane. Promotes membrane protrusion and elongation on the peroxisomal surface. The polypeptide is Peroxisomal membrane protein 11A (PEX11A) (Homo sapiens (Human)).